Consider the following 523-residue polypeptide: 2-isopropylmalate synthase (523 aa).

The 263-residue stretch at 5–267 (VIIFDTTLRD…HTAINHQEIW (263 aa)) folds into the Pyruvate carboxyltransferase domain. The Mn(2+) site is built by Asp14, His202, His204, and Asn238. Positions 392–523 (RLDYFSVQSG…QHNENNKETV (132 aa)) are regulatory domain.

It belongs to the alpha-IPM synthase/homocitrate synthase family. LeuA type 1 subfamily. In terms of assembly, homodimer. Mn(2+) serves as cofactor.

The protein resides in the cytoplasm. The enzyme catalyses 3-methyl-2-oxobutanoate + acetyl-CoA + H2O = (2S)-2-isopropylmalate + CoA + H(+). It participates in amino-acid biosynthesis; L-leucine biosynthesis; L-leucine from 3-methyl-2-oxobutanoate: step 1/4. Its function is as follows. Catalyzes the condensation of the acetyl group of acetyl-CoA with 3-methyl-2-oxobutanoate (2-ketoisovalerate) to form 3-carboxy-3-hydroxy-4-methylpentanoate (2-isopropylmalate). The sequence is that of 2-isopropylmalate synthase from Escherichia coli O81 (strain ED1a).